The sequence spans 307 residues: tRNA-cytidine(32) 2-sulfurtransferase (307 aa).

The short motif at 44-49 (SGGKDS) is the PP-loop motif element. [4Fe-4S] cluster contacts are provided by Cys119, Cys122, and Cys210.

The protein belongs to the TtcA family. As to quaternary structure, homodimer. It depends on Mg(2+) as a cofactor. [4Fe-4S] cluster serves as cofactor.

The protein resides in the cytoplasm. The enzyme catalyses cytidine(32) in tRNA + S-sulfanyl-L-cysteinyl-[cysteine desulfurase] + AH2 + ATP = 2-thiocytidine(32) in tRNA + L-cysteinyl-[cysteine desulfurase] + A + AMP + diphosphate + H(+). It participates in tRNA modification. In terms of biological role, catalyzes the ATP-dependent 2-thiolation of cytidine in position 32 of tRNA, to form 2-thiocytidine (s(2)C32). The sulfur atoms are provided by the cysteine/cysteine desulfurase (IscS) system. The sequence is that of tRNA-cytidine(32) 2-sulfurtransferase from Aliivibrio fischeri (strain ATCC 700601 / ES114) (Vibrio fischeri).